Reading from the N-terminus, the 154-residue chain is Probable chemoreceptor glutamine deamidase CheD (154 aa).

This sequence belongs to the CheD family.

The enzyme catalyses L-glutaminyl-[protein] + H2O = L-glutamyl-[protein] + NH4(+). Its function is as follows. Probably deamidates glutamine residues to glutamate on methyl-accepting chemotaxis receptors (MCPs), playing an important role in chemotaxis. The sequence is that of Probable chemoreceptor glutamine deamidase CheD from Methanococcus maripaludis (strain C6 / ATCC BAA-1332).